The chain runs to 345 residues: S-adenosylmethionine:tRNA ribosyltransferase-isomerase (345 aa).

The protein belongs to the QueA family. Monomer.

The protein resides in the cytoplasm. The enzyme catalyses 7-aminomethyl-7-carbaguanosine(34) in tRNA + S-adenosyl-L-methionine = epoxyqueuosine(34) in tRNA + adenine + L-methionine + 2 H(+). Its pathway is tRNA modification; tRNA-queuosine biosynthesis. Functionally, transfers and isomerizes the ribose moiety from AdoMet to the 7-aminomethyl group of 7-deazaguanine (preQ1-tRNA) to give epoxyqueuosine (oQ-tRNA). The protein is S-adenosylmethionine:tRNA ribosyltransferase-isomerase of Helicobacter pylori (strain P12).